A 131-amino-acid chain; its full sequence is Large ribosomal subunit protein bL17 (131 aa).

It belongs to the bacterial ribosomal protein bL17 family. Part of the 50S ribosomal subunit. Contacts protein L32.

The sequence is that of Large ribosomal subunit protein bL17 from Cupriavidus metallidurans (strain ATCC 43123 / DSM 2839 / NBRC 102507 / CH34) (Ralstonia metallidurans).